The primary structure comprises 357 residues: Homoserine kinase (357 aa).

The protein belongs to the GHMP kinase family. Homoserine kinase subfamily. Homodimer.

The catalysed reaction is L-homoserine + ATP = O-phospho-L-homoserine + ADP + H(+). The protein operates within amino-acid biosynthesis; L-threonine biosynthesis; L-threonine from L-aspartate: step 4/5. Functionally, commits homoserine to the threonine biosynthesis pathway by catalyzing its O-phosphorylation. The protein is Homoserine kinase (THR1) of Candida albicans (strain SC5314 / ATCC MYA-2876) (Yeast).